The sequence spans 678 residues: Translation initiation factor eIF2B subunit epsilon (678 aa).

Thr-172 is modified (phosphothreonine). A disordered region spans residues 467 to 489 (STNELHLSDSESSETSSSSEEDM). A Phosphoserine modification is found at Ser-500. Thr-503 bears the Phosphothreonine mark. Ser-506 is modified (phosphoserine). The W2 domain maps to 508-674 (DFDEGDFNKE…NTAESESESE (167 aa)).

The protein belongs to the eIF-2B gamma/epsilon subunits family. As to quaternary structure, component of the translation initiation factor 2B (eIF2B) complex which is a heterodecamer of two sets of five different subunits: alpha, beta, gamma, delta and epsilon. Subunits alpha, beta and delta comprise a regulatory subcomplex and subunits epsilon and gamma comprise a catalytic subcomplex. Within the complex, the hexameric regulatory complex resides at the center, with the two heterodimeric catalytic subcomplexes bound on opposite sides.

Its subcellular location is the cytoplasm. The protein resides in the cytosol. Its function is as follows. Acts as a component of the translation initiation factor 2B (eIF2B) complex, which catalyzes the exchange of GDP for GTP on the eukaryotic initiation factor 2 (eIF2) complex gamma subunit. Its guanine nucleotide exchange factor activity is repressed when bound to eIF2 complex phosphorylated on the alpha subunit, thereby limiting the amount of methionyl-initiator methionine tRNA available to the ribosome and consequently global translation is repressed. This is Translation initiation factor eIF2B subunit epsilon (tif225) from Schizosaccharomyces pombe (strain 972 / ATCC 24843) (Fission yeast).